The following is a 447-amino-acid chain: Ribosomal protein uS12 methylthiotransferase RimO (447 aa).

Residues 6–122 (EKVSMVSLGC…IAEIIEEKSS (117 aa)) enclose the MTTase N-terminal domain. Residues cysteine 15, cysteine 51, cysteine 85, cysteine 160, cysteine 164, and cysteine 167 each coordinate [4Fe-4S] cluster. The Radical SAM core domain maps to 146-376 (SSPAYTAYLK…MKAQARVSFK (231 aa)). One can recognise a TRAM domain in the interval 379 to 447 (RRLIDTEEQV…DYDLIGEIIS (69 aa)).

Belongs to the methylthiotransferase family. RimO subfamily. [4Fe-4S] cluster serves as cofactor.

The protein localises to the cytoplasm. The catalysed reaction is L-aspartate(89)-[ribosomal protein uS12]-hydrogen + (sulfur carrier)-SH + AH2 + 2 S-adenosyl-L-methionine = 3-methylsulfanyl-L-aspartate(89)-[ribosomal protein uS12]-hydrogen + (sulfur carrier)-H + 5'-deoxyadenosine + L-methionine + A + S-adenosyl-L-homocysteine + 2 H(+). Catalyzes the methylthiolation of an aspartic acid residue of ribosomal protein uS12. The chain is Ribosomal protein uS12 methylthiotransferase RimO from Geobacter sulfurreducens (strain ATCC 51573 / DSM 12127 / PCA).